Here is a 150-residue protein sequence, read N- to C-terminus: Leukotriene C4 synthase (150 aa).

Over 1-6 (MKDEVA) the chain is Cytoplasmic. A helical membrane pass occupies residues 7 to 27 (LLASVTLLGVLLQAYFSLQVI). Topologically, residues 28-48 (SARRAFRVSPPLTTGPPEFER) are lumenal. Arg-30 serves as a coordination point for glutathione. Arg-31 (proton donor) is an active-site residue. The residue at position 36 (Ser-36) is a Phosphoserine. The helical transmembrane segment at 49–69 (IYRAQVNCSEYFPLFLAMLWV) threads the bilayer. Glutathione-binding positions include 51 to 55 (RAQVN) and 58 to 59 (EY). Residues 70–73 (AGIF) are Cytoplasmic-facing. The helical transmembrane segment at 74-94 (FHEGAAALCGLVYLFARLRYF) threads the bilayer. Residue 93–97 (YFQGY) participates in glutathione binding. Residues 95-104 (QGYARSAQQR) are Lumenal-facing. Arg-104 (proton acceptor) is an active-site residue. The helical transmembrane segment at 105–124 (LAPLYASARALWLLVALAAL) threads the bilayer. Residues 125–150 (GLLAHFLPAELRAALLGQLRKLLLRS) lie on the Cytoplasmic side of the membrane.

The protein belongs to the MAPEG family. Homotrimer. Interacts with ALOX5AP and ALOX5. Post-translationally, phosphorylation at Ser-36 by RPS6KB1 inhibits the leukotriene-C4 synthase activity.

Its subcellular location is the nucleus outer membrane. The protein resides in the endoplasmic reticulum membrane. It localises to the nucleus membrane. The enzyme catalyses leukotriene C4 = leukotriene A4 + glutathione. The catalysed reaction is (13S,14S)-epoxy-(4Z,7Z,9E,11E,16Z,19Z)-docosahexaenoate + glutathione = (13R)-S-glutathionyl-(14S)-hydroxy-(4Z,7Z,9E,11E,16Z,19Z)-docosahexaenoate. The protein operates within lipid metabolism; leukotriene C4 biosynthesis. With respect to regulation, inhibited by MK886. Functionally, catalyzes the conjugation of leukotriene A4 with reduced glutathione (GSH) to form leukotriene C4 with high specificity. Can also catalyze the transfer of a glutathionyl group from glutathione (GSH) to 13(S),14(S)-epoxy-docosahexaenoic acid to form maresin conjugate in tissue regeneration 1 (MCTR1), a bioactive lipid mediator that possess potent anti-inflammatory and proresolving actions. This is Leukotriene C4 synthase (LTC4S) from Bos taurus (Bovine).